Consider the following 1358-residue polypeptide: Phosphoribosylformylglycinamidine synthase (1358 aa).

Threonine 2 is subject to N-acetylthreonine. Positions 339–363 (AVSPFPGAATGSGGEIRDEGATGRG) are disordered. ATP-binding positions include 345-356 (GAATGSGGEIRD), 424-426 (NGY), and alanine 719. Positions 720, 762, 766, and 930 each coordinate Mg(2+). Serine 932 contacts ATP. The Glutamine amidotransferase type-1 domain maps to 1093–1358 (VAILREQGVN…LFRSARRWVG (266 aa)). Cysteine 1187 (nucleophile) is an active-site residue. Catalysis depends on residues histidine 1319 and glutamate 1321.

It in the N-terminal section; belongs to the FGAMS family.

It is found in the cytoplasm. It carries out the reaction N(2)-formyl-N(1)-(5-phospho-beta-D-ribosyl)glycinamide + L-glutamine + ATP + H2O = 2-formamido-N(1)-(5-O-phospho-beta-D-ribosyl)acetamidine + L-glutamate + ADP + phosphate + H(+). The protein operates within purine metabolism; IMP biosynthesis via de novo pathway; 5-amino-1-(5-phospho-D-ribosyl)imidazole from N(2)-formyl-N(1)-(5-phospho-D-ribosyl)glycinamide: step 1/2. Phosphoribosylformylglycinamidine synthase involved in the purines biosynthetic pathway. Catalyzes the ATP-dependent conversion of formylglycinamide ribonucleotide (FGAR) and glutamine to yield formylglycinamidine ribonucleotide (FGAM) and glutamate. This Saccharomyces cerevisiae (strain ATCC 204508 / S288c) (Baker's yeast) protein is Phosphoribosylformylglycinamidine synthase (ADE6).